Here is a 248-residue protein sequence, read N- to C-terminus: Probable aquaporin TIP2-1 (248 aa).

Helical transmembrane passes span 20–40 and 54–74; these read AYVA…GSAI and AGLV…VSVA. Positions 83-85 match the NPA 1 motif; the sequence is NPA. 3 consecutive transmembrane segments (helical) span residues 97–119, 141–161, and 168–188; these read TILT…CLLL, GVVM…ATAA, and LGTI…LAAG. An NPA 2 motif is present at residues 196–198; sequence NPA. The helical transmembrane segment at 217 to 237 threads the bilayer; the sequence is WVGPLIGGGLAGLVYGDVFIG.

It belongs to the MIP/aquaporin (TC 1.A.8) family. TIP (TC 1.A.8.10) subfamily. Expressed in roots and anthers.

It localises to the vacuole membrane. Functionally, aquaporins facilitate the transport of water and small neutral solutes across cell membranes. May be involved in transport from the vacuolar compartment to the cytoplasm. The protein is Probable aquaporin TIP2-1 (TIP2-1) of Oryza sativa subsp. japonica (Rice).